The chain runs to 384 residues: MSVVGIVAEYNPFHSGHEFLMNQARLIAGDDPIIAVMSGNYVQRGEMAILDKWSRARSAIEAGADLVFELPFSYAVQAADMFATGGVDLLTRLGAKNLVFGVEDANLNFEYFGDRISKIPRQRQEFADYSQTYSTQYNQMVAREIGHEVSEPNAILGLAYAVANANLGSPLKLSPVNRVGAGHDDILQREAVVQSASAIRNLLLNGAERSELEQWLPKGEIAAFDQEKVLPNWELLFPFLKYRLESASIKELQQIYQMSEGLEYKFKAEIHLAENFADFLRRVKSKRYTYSRLRRLSLYTLLNVTEADVLNSYDHVSTMLLAYSKRGRKYLKQQRKDFEIDIVSKVDRKNAQEGTLGLQVRVDRLFEQIVGADQNFGRRPLEVN.

ATP is bound by residues 7-20, glycine 101, asparagine 153, and arginine 178; that span reads VAEY…HEFL.

Belongs to the TmcAL family.

The protein localises to the cytoplasm. It carries out the reaction cytidine(34) in elongator tRNA(Met) + acetate + ATP = N(4)-acetylcytidine(34) in elongator tRNA(Met) + AMP + diphosphate. Catalyzes the formation of N(4)-acetylcytidine (ac(4)C) at the wobble position of elongator tRNA(Met), using acetate and ATP as substrates. First activates an acetate ion to form acetyladenylate (Ac-AMP) and then transfers the acetyl group to tRNA to form ac(4)C34. The sequence is that of tRNA(Met) cytidine acetate ligase from Lactobacillus delbrueckii subsp. bulgaricus (strain ATCC BAA-365 / Lb-18).